We begin with the raw amino-acid sequence, 449 residues long: Protein phosphatase fem-2 (449 aa).

Residues 28–34 (EEAFADE) are interaction with fem-1 and fem-3. An interaction with fem-3 region spans residues 54 to 56 (IRF). The PPM-type phosphatase domain occupies 160-424 (GIHVSGDQLK…DNVSVVIGFL (265 aa)). 4 residues coordinate Mg(2+): Asp202, Gly203, Asp370, and Asp415.

It belongs to the PP2C family. As to quaternary structure, component of a complex containing fem-1, fem-2 and fem-3. Interacts (via N-terminus) with fem-1 and fem-3. Component of the CBC(fem-1) E3 ubiquitin-protein ligase complex, at least composed of cul-2, elc-1, tra-1, fem-1, fem-2 and fem-3; mediates the ubiquitination and subsequent proteasomal degradation of tra-1. Interacts with tra-1. Interacts with sel-10. Mg(2+) serves as cofactor. Mn(2+) is required as a cofactor.

It catalyses the reaction O-phospho-L-seryl-[protein] + H2O = L-seryl-[protein] + phosphate. The enzyme catalyses O-phospho-L-threonyl-[protein] + H2O = L-threonyl-[protein] + phosphate. Its function is as follows. Dephosphorylates auto-phosphorylated Ca(2+)/calmodulin-dependent protein kinase unc-43/CAMKII in vitro. Involved in the regulation of sex determination. Together with fem-3, required for male sexual development by promoting the proteasomal-mediated degradation of tra-1, a transcription repressor of male-specific genes. Promotes apoptosis. In Caenorhabditis elegans, this protein is Protein phosphatase fem-2.